Consider the following 494-residue polypeptide: Splicing regulatory glutamine/lysine-rich protein 1 (494 aa).

In terms of domain architecture, RRM spans 69–145 (RTVYVGNLNS…RPLKINHSNN (77 aa)). Phosphoserine is present on residues Ser174 and Ser187. The segment at 176–494 (ISAAIEPESG…ESPCSKADAV (319 aa)) is disordered. Over residues 183–192 (ESGKSNERKG) the composition is skewed to basic and acidic residues. Residues 193-262 (GRSRSHTRSK…KSRSRSRSRD (70 aa)) are compositionally biased toward basic residues. The segment covering 263–340 (KRKDTREKVK…DRSKETDEKR (78 aa)) has biased composition (basic and acidic residues). Thr348 carries the phosphothreonine modification. The segment covering 357-373 (RRSRSTSRERRRRRSRS) has biased composition (basic residues). Residues 404–474 (REKERDHISD…SPRTEDEGKV (71 aa)) show a composition bias toward basic and acidic residues. The span at 476-486 (HNGNCQPNEES) shows a compositional bias: polar residues. Lys490 is covalently cross-linked (Glycyl lysine isopeptide (Lys-Gly) (interchain with G-Cter in SUMO2)).

Belongs to the splicing factor SR family. Homodimer. Binds SFRS1, SFRS2, SFRS3 and SFRS6. Interacts with the spliceosome. Interacts with SREK1IP1.

The protein resides in the nucleus. In terms of biological role, participates in the regulation of alternative splicing by modulating the activity of other splice facors. Inhibits the splicing activity of SFRS1, SFRS2 and SFRS6. Augments the splicing activity of SFRS3. This Mus musculus (Mouse) protein is Splicing regulatory glutamine/lysine-rich protein 1 (Srek1).